Here is a 508-residue protein sequence, read N- to C-terminus: Citrate lyase alpha chain (508 aa).

Oligomer with a subunit composition of (alpha,beta,gamma)6.

The protein resides in the cytoplasm. The catalysed reaction is citrate = oxaloacetate + acetate. It carries out the reaction citrate + acetyl-CoA = (3S)-citryl-CoA + acetate. Represents a citrate:acetyl-ACP transferase. The sequence is that of Citrate lyase alpha chain (citF) from Klebsiella pneumoniae.